The chain runs to 182 residues: Putative lipoprotein LpqE (182 aa).

Residues 1 to 29 form the signal peptide; the sequence is MNRCNIRLRLAGMTTWVASIALLAAALSG. Cys30 is lipidated: N-palmitoyl cysteine. Residue Cys30 is the site of S-diacylglycerol cysteine attachment.

It localises to the cell membrane. The polypeptide is Putative lipoprotein LpqE (lpqE) (Mycobacterium bovis (strain ATCC BAA-935 / AF2122/97)).